We begin with the raw amino-acid sequence, 300 residues long: 4-diphosphocytidyl-2-C-methyl-D-erythritol kinase (300 aa).

The active site involves Lys-22. Position 105–115 (105–115) interacts with ATP; sequence PMGGGLGGGSS. Asp-147 is a catalytic residue.

This sequence belongs to the GHMP kinase family. IspE subfamily.

It catalyses the reaction 4-CDP-2-C-methyl-D-erythritol + ATP = 4-CDP-2-C-methyl-D-erythritol 2-phosphate + ADP + H(+). It participates in isoprenoid biosynthesis; isopentenyl diphosphate biosynthesis via DXP pathway; isopentenyl diphosphate from 1-deoxy-D-xylulose 5-phosphate: step 3/6. In terms of biological role, catalyzes the phosphorylation of the position 2 hydroxy group of 4-diphosphocytidyl-2C-methyl-D-erythritol. The polypeptide is 4-diphosphocytidyl-2-C-methyl-D-erythritol kinase (Colwellia psychrerythraea (strain 34H / ATCC BAA-681) (Vibrio psychroerythus)).